We begin with the raw amino-acid sequence, 874 residues long: Alanine--tRNA ligase (874 aa).

H562, H566, C665, and H669 together coordinate Zn(2+).

Belongs to the class-II aminoacyl-tRNA synthetase family. Requires Zn(2+) as cofactor.

Its subcellular location is the cytoplasm. It catalyses the reaction tRNA(Ala) + L-alanine + ATP = L-alanyl-tRNA(Ala) + AMP + diphosphate. Its function is as follows. Catalyzes the attachment of alanine to tRNA(Ala) in a two-step reaction: alanine is first activated by ATP to form Ala-AMP and then transferred to the acceptor end of tRNA(Ala). Also edits incorrectly charged Ser-tRNA(Ala) and Gly-tRNA(Ala) via its editing domain. This chain is Alanine--tRNA ligase, found in Stutzerimonas stutzeri (strain A1501) (Pseudomonas stutzeri).